The sequence spans 353 residues: Ribosome biogenesis protein BRX1 homolog (353 aa).

The segment covering 1–10 (MAATKRKRRG) has biased composition (basic residues). Residues 1–46 (MAATKRKRRGGFAVQAKKPKRNEIDAEPPAKRHATAEEVEEEERDR) are disordered. Residues 21–36 (RNEIDAEPPAKRHATA) show a composition bias toward basic and acidic residues. Residues 60–249 (ERILIFSSRG…LIKIFQGSFG (190 aa)) form the Brix domain. Lys160 participates in a covalent cross-link: Glycyl lysine isopeptide (Lys-Gly) (interchain with G-Cter in SUMO2). Ser261 carries the post-translational modification Phosphoserine. Lys276 carries the post-translational modification N6-acetyllysine. Glycyl lysine isopeptide (Lys-Gly) (interchain with G-Cter in SUMO2) cross-links involve residues Lys314 and Lys322.

This sequence belongs to the BRX1 family.

It is found in the nucleus. It localises to the nucleolus. Its function is as follows. Required for biogenesis of the 60S ribosomal subunit. In Homo sapiens (Human), this protein is Ribosome biogenesis protein BRX1 homolog (BRIX1).